Reading from the N-terminus, the 524-residue chain is Keratin, type II cytoskeletal 71 (524 aa).

Positions 1–130 (MNRQFTCKSG…DPEIQKVRAQ (130 aa)) are head. Positions 131–166 (EREQIKALNNKFASFIDKVRFLEQQNQVLETKWELL) are coil 1A. One can recognise an IF rod domain in the interval 131–444 (EREQIKALNN…KLLESEECRM (314 aa)). Residues 167–185 (QQLDLNNCKNNLEPILEGY) are linker 1. A coil 1B region spans residues 186-277 (ISNLRKQLET…CLYEAEIAQI (92 aa)). Positions 278–301 (QSHISDMSVILSMDNNRDLNLDSI) are linker 12. The tract at residues 302–440 (IDEVRAQYEE…ATYRKLLESE (139 aa)) is coil 2. A tail region spans residues 441 to 524 (ECRMSGEFPS…QSASSKKASR (84 aa)). The tract at residues 491 to 524 (VRGGEGRSRGSTSDYKDTLGKGSSQSASSKKASR) is disordered. Basic and acidic residues predominate over residues 494-509 (GEGRSRGSTSDYKDTL). Low complexity predominate over residues 510–524 (GKGSSQSASSKKASR).

The protein belongs to the intermediate filament family. In terms of assembly, heterodimer of a type I and a type II keratin. Associates with KRT16 and/or KRT17.

The protein resides in the cytoplasm. Its subcellular location is the cytoskeleton. Its function is as follows. Plays a central role in hair formation. Essential component of keratin intermediate filaments in the inner root sheath (IRS) of the hair follicle. The protein is Keratin, type II cytoskeletal 71 (KRT71) of Felis catus (Cat).